The sequence spans 228 residues: CD9 antigen (228 aa).

At 1–12 (MPVKGGTKCIKY) the chain is on the cytoplasmic side. Cys9 carries the S-palmitoyl cysteine lipid modification. Residues 13 to 33 (LLFGFNFIFWLAGIAVLAIGL) form a helical membrane-spanning segment. Residues 34 to 55 (WLRFDSQTKSIFEQETNNNNSS) lie on the Extracellular side of the membrane. N-linked (GlcNAc...) asparagine glycosylation is found at Asn52 and Asn53. The chain crosses the membrane as a helical span at residues 56–76 (FYTGVYILIGAGALMMLVGFL). The Cytoplasmic portion of the chain corresponds to 77–87 (GCCGAVQESQC). 3 S-palmitoyl cysteine lipidation sites follow: Cys78, Cys79, and Cys87. A helical membrane pass occupies residues 88 to 111 (MLGLFFGFLLVIFAIEIAAAIWGY). The Extracellular portion of the chain corresponds to 112–195 (SHKDEVIKEV…KEVFDNKFHI (84 aa)). 2 disulfides stabilise this stretch: Cys152-Cys181 and Cys153-Cys167. Residues 196-221 (IGAVGIGIAVVMIFGMIFSMILCCAI) traverse the membrane as a helical segment. 2 S-palmitoyl cysteine lipidation sites follow: Cys218 and Cys219. Residues 222 to 228 (RRNREMV) lie on the Cytoplasmic side of the membrane.

Belongs to the tetraspanin (TM4SF) family. Forms both disulfide-linked homodimers and higher homooligomers as well as heterooligomers with other members of the tetraspanin family. Interacts (via the second extracellular domain) with integrin ITGAV:ITGB3. Interacts with integrin ITGA6:ITGB1; interaction takes place in oocytes and is involved in sperm-egg fusion. Part of integrin-tetraspanin complexes composed of CD81, beta-1 and beta-2 integrins in the membrane of monocyte/macrophages. Interacts with CD63; identified in a complex with CD63 and ITGB3. Associates with CR2/CD21 and with PTGFRN/CD9P1. Part of a complex composed of CD9, CD81, PTGFRN and IGSF8. Interacts directly with IGSF8. Interacts with PDPN; this interaction is homophilic and attenuates platelet aggregation and pulmonary metastasis induced by PDPN. Interacts (on T cell side) with CD81 at immunological synapses between antigen-presenting cells and T cells. Palmitoylated at a low, basal level in unstimulated platelets. The level of palmitoylation increases when platelets are activated by thrombin (in vitro). The protein exists in three forms with molecular masses between 22 and 27 kDa, and is known to carry covalently linked fatty acids. Palmitoylation by ZDHHC2 regulates CD9 expression, association with other tetraspanin family proteins and function in cell adhesion.

The protein resides in the cell membrane. It is found in the membrane. It localises to the secreted. The protein localises to the extracellular exosome. Its function is as follows. Integral membrane protein associated with integrins, which regulates different processes, such as sperm-egg fusion, platelet activation and aggregation, and cell adhesion. Present at the cell surface of oocytes and plays a key role in sperm-egg fusion, possibly by organizing multiprotein complexes and the morphology of the membrane required for the fusion. In myoblasts, associates with CD81 and PTGFRN and inhibits myotube fusion during muscle regeneration. In macrophages, associates with CD81 and beta-1 and beta-2 integrins, and prevents macrophage fusion into multinucleated giant cells specialized in ingesting complement-opsonized large particles. Also prevents the fusion between mononuclear cell progenitors into osteoclasts in charge of bone resorption. Acts as a receptor for PSG17. Involved in platelet activation and aggregation. Regulates paranodal junction formation. Involved in cell adhesion, cell motility and tumor metastasis. The sequence is that of CD9 antigen from Chlorocebus aethiops (Green monkey).